Reading from the N-terminus, the 431-residue chain is IMP-specific 5'-nucleotidase 1 (431 aa).

Lysine 117 contacts ATP. The active-site Nucleophile is the aspartate 157. IMP contacts are provided by aspartate 157, aspartate 159, aspartate 165, threonine 193, aspartate 349, and lysine 357. Mg(2+) contacts are provided by aspartate 157 and aspartate 159. Aspartate 159 functions as the Proton donor in the catalytic mechanism. Aspartate 388 lines the Mg(2+) pocket.

The protein belongs to the ISN1 family. As to quaternary structure, homotetramer. It depends on Mg(2+) as a cofactor.

It catalyses the reaction IMP + H2O = inosine + phosphate. Allosterically activated by ATP. ATP binding is a prerequisite to magnesium and substrate binding. ATP binds to 2 of the subunits in the homotetramer inducing a closure of these 2 subunits and the release of the C-terminal loop, thereby activating the enzyme. IMP-specific 5'-nucleotidase involved in IMP (inositol monophosphate) degradation. The protein is IMP-specific 5'-nucleotidase 1 (isn-1) of Neurospora crassa (strain ATCC 24698 / 74-OR23-1A / CBS 708.71 / DSM 1257 / FGSC 987).